A 187-amino-acid chain; its full sequence is Flavin prenyltransferase LpdB (187 aa).

FMN is bound by residues 10–12 (GAS), serine 37, 88–91 (SMKT), and arginine 123. Residues tyrosine 153 and lysine 169 each coordinate dimethylallyl phosphate.

This sequence belongs to the UbiX/PAD1 family.

The catalysed reaction is dimethylallyl phosphate + FMNH2 = prenylated FMNH2 + phosphate. Involved in tannin degradation. Flavin prenyltransferase that catalyzes the synthesis of the prenylated FMN cofactor (prenyl-FMN) for gallate decarboxylase LpdC. The prenyltransferase is metal-independent and links a dimethylallyl moiety from dimethylallyl monophosphate (DMAP) to the flavin N5 and C6 atoms of FMN. The protein is Flavin prenyltransferase LpdB of Lactiplantibacillus plantarum (strain ATCC BAA-793 / NCIMB 8826 / WCFS1) (Lactobacillus plantarum).